We begin with the raw amino-acid sequence, 141 residues long: Large ribosomal subunit protein bL17 (141 aa).

Belongs to the bacterial ribosomal protein bL17 family. Part of the 50S ribosomal subunit. Contacts protein L32.

This chain is Large ribosomal subunit protein bL17, found in Bartonella bacilliformis (strain ATCC 35685 / KC583 / Herrer 020/F12,63).